A 159-amino-acid polypeptide reads, in one-letter code: Large ribosomal subunit protein uL10 (159 aa).

The protein belongs to the universal ribosomal protein uL10 family. Part of the ribosomal stalk of the 50S ribosomal subunit. The N-terminus interacts with L11 and the large rRNA to form the base of the stalk. The C-terminus forms an elongated spine to which L12 dimers bind in a sequential fashion forming a multimeric L10(L12)X complex.

In terms of biological role, forms part of the ribosomal stalk, playing a central role in the interaction of the ribosome with GTP-bound translation factors. The protein is Large ribosomal subunit protein uL10 of Campylobacter jejuni (strain RM1221).